The chain runs to 27 residues: Cupiennin-3d (27 aa).

Residue E27 is modified to Glutamic acid 1-amide.

In terms of tissue distribution, expressed by the venom gland.

The protein localises to the secreted. In Cupiennius salei (American wandering spider), this protein is Cupiennin-3d.